The following is a 335-amino-acid chain: MSLDINQIALHQLIKRDEQNLELVLRDSLLEPTATVVEMVAELHRVYSAKNKAYGLFNEESELAQALRLQRQGEEDFLAFSRAATGRLRDELTKYPFADGGIVLFCHYRYLAVEYLLVAVLNNLSSMRVNENLDINPTHYLDINHADIVARIDLTEWETNPESTRYLTFLKGRVGRKVADFFMDFLGASEGLNAKAQNRGLLQAVDDFTAEAQLDKAERQNVRRQVYSYCNERLQAGEEIELESLSKELSCVSEVSFSEFTAEKGYELEESFPADRSTLRQLTKYAGSGGGLTINFDAMLLGERIFWDPATDTLTIKGTPPNLRDQLQRRTSGGK.

It belongs to the YejK family.

Its subcellular location is the cytoplasm. It is found in the nucleoid. The chain is Nucleoid-associated protein YejK from Salmonella arizonae (strain ATCC BAA-731 / CDC346-86 / RSK2980).